Consider the following 126-residue polypeptide: Holo-[acyl-carrier-protein] synthase (126 aa).

Mg(2+)-binding residues include Asp-9 and Glu-58.

Belongs to the P-Pant transferase superfamily. AcpS family. It depends on Mg(2+) as a cofactor.

It is found in the cytoplasm. It carries out the reaction apo-[ACP] + CoA = holo-[ACP] + adenosine 3',5'-bisphosphate + H(+). In terms of biological role, transfers the 4'-phosphopantetheine moiety from coenzyme A to a Ser of acyl-carrier-protein. The polypeptide is Holo-[acyl-carrier-protein] synthase (Salmonella choleraesuis (strain SC-B67)).